A 171-amino-acid chain; its full sequence is 3-hydroxydecanoyl-[acyl-carrier-protein] dehydratase (171 aa).

The active site involves H70.

The protein belongs to the thioester dehydratase family. FabA subfamily. In terms of assembly, homodimer.

Its subcellular location is the cytoplasm. It catalyses the reaction a (3R)-hydroxyacyl-[ACP] = a (2E)-enoyl-[ACP] + H2O. It carries out the reaction (3R)-hydroxydecanoyl-[ACP] = (2E)-decenoyl-[ACP] + H2O. The enzyme catalyses (2E)-decenoyl-[ACP] = (3Z)-decenoyl-[ACP]. It participates in lipid metabolism; fatty acid biosynthesis. Necessary for the introduction of cis unsaturation into fatty acids. Catalyzes the dehydration of (3R)-3-hydroxydecanoyl-ACP to E-(2)-decenoyl-ACP and then its isomerization to Z-(3)-decenoyl-ACP. Can catalyze the dehydratase reaction for beta-hydroxyacyl-ACPs with saturated chain lengths up to 16:0, being most active on intermediate chain length. The chain is 3-hydroxydecanoyl-[acyl-carrier-protein] dehydratase from Pseudomonas putida (strain GB-1).